The primary structure comprises 2527 residues: Leucine-rich repeat serine/threonine-protein kinase 2 (2527 aa).

Residues 1 to 969 form a required for RAB29-mediated activation region; sequence MASGSCQGCE…RSSKLQSHMR (969 aa). Residues 319–348 are a coiled coil; it reads LTETIFLNQDLEEKNENQENDDEGEEDKLF. Phosphoserine is present on residues Ser-910, Ser-935, Ser-955, and Ser-973. LRR repeat units follow at residues 983–1004, 1012–1033, 1036–1057, 1059–1080, 1084–1105, 1108–1129, 1130–1150, 1156–1171, 1174–1196, 1197–1218, 1221–1245, 1246–1267, and 1269–1291; these read YITS…SQKC, HLEK…LCET, SLTH…LLKM, CIAN…DPTV, TLKQ…LTDV, KLEQ…LRLK, ELKI…NFLE, ESFS…MPFL, SMTI…LNLP, HLRS…AHWK, NLRE…YLWS, RVEK…IGCL, and NLTS…MGKL. A Phosphoserine; by autocatalysis modification is found at Ser-1292. In terms of domain architecture, Roc spans 1328–1511; that stretch reads KAVPYNRMKL…KTIINESLNF (184 aa). 1341–1348 provides a ligand contact to GTP; that stretch reads GNTGSGKT. A Phosphoserine modification is found at Ser-1444. The 195-residue stretch at 1546–1740 folds into the COR domain; sequence PVIDRKRLLQ…RMYWRQGIYL (195 aa). A Protein kinase domain is found at 1879–2138; that stretch reads QAPEFLLGDG…FDILNSAELV (260 aa). Leu-1885, Asp-1887, Gly-1888, Gly-1891, Val-1893, Ala-1904, Lys-1906, Met-1947, Glu-1948, Ala-1950, Ser-1954, and Arg-1957 together coordinate ATP. The active-site Proton acceptor is the Asp-1994. Residues His-1998, Leu-2001, Ala-2016, and Asp-2017 each coordinate ATP. 2098 to 2121 is a GTP binding site; that stretch reads EYGCAPWPMVEKLIKQCLKENPQE. 7 WD repeats span residues 2139 to 2183, 2188 to 2228, 2233 to 2276, 2281 to 2327, 2333 to 2377, 2402 to 2438, and 2443 to 2497; these read CLTR…SFLD, GYTS…LVIN, KKRH…AIFE, KLKG…FSFS, QKLI…EVWD, KESK…LLLD, and RLIR…TVWD. 2295-2298 contacts GTP; the sequence is NVST.

This sequence belongs to the protein kinase superfamily. TKL Ser/Thr protein kinase family. In terms of assembly, homodimer. Homotetramer; when activated by GTP-bound RAB29. Interacts with PRKN, PRDX3, and TPCN2. Interacts with VPS35. Interacts (via N-terminus) with RAB29; this interaction is direct and stimulates kinase activity. Interacts (via ROC domain) with SEC16A. Interacts with APP; interaction promotes phosphorylation of 'Thr-743' of APP. Interacts with MAPT. Interacts with RAB8A, RAB10, and RAB12. Interacts (via N-terminus) with RAB32. Interacts with YWHAG; this interaction is dependent on phosphorylation of Ser-910 and either Ser-935 or Ser-1444. Interacts with SFN; this interaction is dependent on phosphorylation of Ser-910 and/or Ser-935. Mg(2+) serves as cofactor. Post-translationally, autophosphorylated at Ser-1292; autophosphorylation is stimulated by RAB29. Phosphorylation of Ser-910 and either Ser-935 or Ser-1444 facilitates interaction with YWHAG. Phosphorylation of Ser-910 and/or Ser-935 facilitates interaction with SFN. In terms of processing, ubiquitinated by TRIM1; undergoes 'Lys-48'-linked polyubiquitination leading to proteasomal degradation. As to expression, expressed in pyramidal neurons in all cortical laminae of the visual cortex, in neurons of the substantia nigra pars compacta and caudate putamen (at protein level). Expressed in neutrophils (at protein level). Expressed in the brain. Expressed throughout the adult brain, but at a lower level than in heart and liver. Also expressed in placenta, lung, skeletal muscle, kidney and pancreas. In the brain, expressed in the cerebellum, cerebral cortex, medulla, spinal cord occipital pole, frontal lobe, temporal lobe and putamen. Expression is particularly high in brain dopaminoceptive areas.

It localises to the cytoplasmic vesicle. The protein resides in the perikaryon. The protein localises to the golgi apparatus membrane. Its subcellular location is the cell projection. It is found in the axon. It localises to the dendrite. The protein resides in the endoplasmic reticulum membrane. The protein localises to the secretory vesicle. Its subcellular location is the synaptic vesicle membrane. It is found in the endosome. It localises to the lysosome. The protein resides in the mitochondrion outer membrane. The protein localises to the cytoplasm. Its subcellular location is the cytoskeleton. It is found in the phagosome. The catalysed reaction is L-threonyl-[protein] + ATP = O-phospho-L-threonyl-[protein] + ADP + H(+). The enzyme catalyses L-seryl-[protein] + ATP = O-phospho-L-seryl-[protein] + ADP + H(+). It carries out the reaction GTP + H2O = GDP + phosphate + H(+). With respect to regulation, kinase activity is regulated by the GTPase activity of the ROC domain. GTP-bound LRRK2 kinase activity is stimulated by RAB29. Phosphorylation of RAB10 'Thr-73' is stimulated by RAB29 and RAB32. Inhibited by small molecule inhibitor MLi-2. Its function is as follows. Serine/threonine-protein kinase which phosphorylates a broad range of proteins involved in multiple processes such as neuronal plasticity, innate immunity, autophagy, and vesicle trafficking. Is a key regulator of RAB GTPases by regulating the GTP/GDP exchange and interaction partners of RABs through phosphorylation. Phosphorylates RAB3A, RAB3B, RAB3C, RAB3D, RAB5A, RAB5B, RAB5C, RAB8A, RAB8B, RAB10, RAB12, RAB29, RAB35, and RAB43. Regulates the RAB3IP-catalyzed GDP/GTP exchange for RAB8A through the phosphorylation of 'Thr-72' on RAB8A. Inhibits the interaction between RAB8A and GDI1 and/or GDI2 by phosphorylating 'Thr-72' on RAB8A. Regulates primary ciliogenesis through phosphorylation of RAB8A and RAB10, which promotes SHH signaling in the brain. Together with RAB29, plays a role in the retrograde trafficking pathway for recycling proteins, such as mannose-6-phosphate receptor (M6PR), between lysosomes and the Golgi apparatus in a retromer-dependent manner. Regulates neuronal process morphology in the intact central nervous system (CNS). Plays a role in synaptic vesicle trafficking. Plays an important role in recruiting SEC16A to endoplasmic reticulum exit sites (ERES) and in regulating ER to Golgi vesicle-mediated transport and ERES organization. Positively regulates autophagy through a calcium-dependent activation of the CaMKK/AMPK signaling pathway. The process involves activation of nicotinic acid adenine dinucleotide phosphate (NAADP) receptors, increase in lysosomal pH, and calcium release from lysosomes. Phosphorylates PRDX3. By phosphorylating APP on 'Thr-743', which promotes the production and the nuclear translocation of the APP intracellular domain (AICD), regulates dopaminergic neuron apoptosis. Acts as a positive regulator of innate immunity by mediating phosphorylation of RIPK2 downstream of NOD1 and NOD2, thereby enhancing RIPK2 activation. Independent of its kinase activity, inhibits the proteasomal degradation of MAPT, thus promoting MAPT oligomerization and secretion. In addition, has GTPase activity via its Roc domain which regulates LRRK2 kinase activity. Recruited by RAB29/RAB7L1 to overloaded lysosomes where it phosphorylates and stabilizes RAB8A and RAB10 which promote lysosomal content release and suppress lysosomal enlargement through the EHBP1 and EHBP1L1 effector proteins. The sequence is that of Leucine-rich repeat serine/threonine-protein kinase 2 (LRRK2) from Homo sapiens (Human).